The chain runs to 225 residues: Ras-related protein Rab-21 (225 aa).

At Ala-2 the chain carries N-acetylalanine. GTP-binding residues include Gly-28, Gly-31, Lys-32, Thr-33, Ser-34, Asn-45, Asp-46, His-48, Thr-50, and Thr-51. Thr-33 lines the Mg(2+) pocket. The short motif at 43–56 (KFNDKHITTLQASF) is the Switch 1 element. Residues Thr-51 and Asp-74 each contribute to the Mg(2+) site. The short motif at 76 to 94 (AGQERFHALGPIYYRDSNG) is the Switch 2 element. 6 residues coordinate GTP: Gly-77, Asn-132, Lys-133, Asp-135, Ala-163, and Lys-164. Residues 188-225 (ERAKGNGSSQPGTARRGVQIIDDEPQAQTSGGGCCSSG) form a disordered region. Residues Cys-221 and Cys-222 are each lipidated (S-geranylgeranyl cysteine). Cysteine methyl ester is present on Cys-222. A propeptide spans 223 to 225 (SSG) (removed in mature form).

This sequence belongs to the small GTPase superfamily. Rab family. As to quaternary structure, interacts with the cytoplasmic tail of integrins ITGA1, ITGA2, ITGA5, ITGA6, ITGA11 and ITGB1. Interacts with RABGEF1 (via VPS9 domain). Interacts with ANKRD27. Interacts with VAMP7. Interacts (in GTP-bound form) with VAMP8 in response to starvation; the interaction probably regulates VAMP8 endolysosomal trafficking. Interacts (active GTP-bound form) with TMED10; the interaction is indirect and regulates TMED10 abundance and localization at the Golgi. Requires Mg(2+) as cofactor. In terms of tissue distribution, widely expressed. In jejunal tissue, predominantly expressed in the apical region of the epithelial cell layer of the villi, weak expression, if any, in the crypt epithelium. Capillary endothelium and some cell types in the lamina propria also show expression.

The protein localises to the endoplasmic reticulum membrane. Its subcellular location is the golgi apparatus. It is found in the trans-Golgi network. The protein resides in the golgi apparatus membrane. It localises to the early endosome membrane. The protein localises to the cytoplasmic vesicle membrane. Its subcellular location is the cleavage furrow. It is found in the cell projection. The protein resides in the neuron projection. It carries out the reaction GTP + H2O = GDP + phosphate + H(+). Its activity is regulated as follows. Regulated by guanine nucleotide exchange factors (GEFs) including ANKRD27 and RABGEF1, which promote the exchange of bound GDP for free GTP. Regulated by GTPase activating proteins (GAPs) which increase the GTP hydrolysis activity. Inhibited by GDP dissociation inhibitors (GDIs). Its function is as follows. The small GTPases Rab are key regulators of intracellular membrane trafficking, from the formation of transport vesicles to their fusion with membranes. Rabs cycle between an inactive GDP-bound form and an active GTP-bound form that is able to recruit to membranes different sets of downstream effectors directly responsible for vesicle formation, movement, tethering and fusion. RAB21 is involved in membrane trafficking control. During the mitosis of adherent cells, controls the endosomal trafficking of integrins which is required for the successful completion of cytokinesis. Regulates integrin internalization and recycling, but does not influence the traffic of endosomally translocated receptors in general. As a result, may regulate cell adhesion and migration. Involved in neurite growth. Following SBF2/MTMT13-mediated activation in response to starvation-induced autophagy, binds to and regulates SNARE protein VAMP8 endolysosomal transport required for SNARE-mediated autophagosome-lysosome fusion. Modulates protein levels of the cargo receptors TMED2 and TMED10, and required for appropriate Golgi localization of TMED10. This is Ras-related protein Rab-21 from Homo sapiens (Human).